The sequence spans 65 residues: Orally active insecticidal peptide-3 (65 aa).

The first 21 residues, Met-1–Gly-21, serve as a signal peptide directing secretion. Residues Val-22–Arg-29 constitute a propeptide that is removed on maturation. 3 disulfides stabilise this stretch: Cys-31-Cys-46, Cys-38-Cys-51, and Cys-45-Cys-58. Position 62 is a proline amide (Pro-62).

Belongs to the neurotoxin 10 (Hwtx-1) family. 46 (Jztx-7/10/12) subfamily. In terms of tissue distribution, expressed by the venom gland.

The protein localises to the secreted. Probable ion channel inhibitor. Shows insecticidal activity when injected into mealworms. The sequence is that of Orally active insecticidal peptide-3 from Selenotypus plumipes (Australian featherleg tarantula).